The chain runs to 493 residues: 3-octaprenyl-4-hydroxybenzoate carboxy-lyase (493 aa).

Asn172 is a binding site for Mn(2+). Prenylated FMN-binding positions include 175–177, 189–191, and 194–195; these read IYR, RWL, and RG. Glu238 provides a ligand contact to Mn(2+). Asp287 acts as the Proton donor in catalysis.

This sequence belongs to the UbiD family. As to quaternary structure, homohexamer. It depends on prenylated FMN as a cofactor. Mn(2+) is required as a cofactor.

It localises to the cell membrane. The enzyme catalyses a 4-hydroxy-3-(all-trans-polyprenyl)benzoate + H(+) = a 2-(all-trans-polyprenyl)phenol + CO2. It participates in cofactor biosynthesis; ubiquinone biosynthesis. Its function is as follows. Catalyzes the decarboxylation of 3-octaprenyl-4-hydroxy benzoate to 2-octaprenylphenol, an intermediate step in ubiquinone biosynthesis. The sequence is that of 3-octaprenyl-4-hydroxybenzoate carboxy-lyase from Shewanella woodyi (strain ATCC 51908 / MS32).